The primary structure comprises 66 residues: Protein translocase subunit SecE (66 aa).

A helical membrane pass occupies residues 29 to 49 (LVASTLVVVVAVFIFSLICLV).

Belongs to the SecE/SEC61-gamma family. In terms of assembly, component of the Sec protein translocase complex. Heterotrimer consisting of SecY, SecE and SecG subunits. The heterotrimers can form oligomers, although 1 heterotrimer is thought to be able to translocate proteins. Interacts with the ribosome. Interacts with SecDF, and other proteins may be involved. Interacts with SecA.

The protein resides in the cell inner membrane. Essential subunit of the Sec protein translocation channel SecYEG. Clamps together the 2 halves of SecY. May contact the channel plug during translocation. The protein is Protein translocase subunit SecE of Rickettsia felis (strain ATCC VR-1525 / URRWXCal2) (Rickettsia azadi).